A 97-amino-acid chain; its full sequence is Small nuclear ribonucleoprotein Sm D3 (97 aa).

Residues 3 to 75 form the Sm domain; that stretch reads LCIKLLHETQ…IRFLIVPDML (73 aa).

Belongs to the snRNP core protein family. Belongs to the 40S cdc5-associated complex (or cwf complex), a spliceosome sub-complex reminiscent of a late-stage spliceosome composed of the U2, U5 and U6 snRNAs and at least brr2, cdc5, cwf2/prp3, cwf3/syf1, cwf4/syf3, cwf5/ecm2, spp42/cwf6, cwf7/spf27, cwf8, cwf9, cwf10, cwf11, cwf12, prp45/cwf13, cwf14, cwf15, cwf16, cwf17, cwf18, cwf19, cwf20, cwf21, cwf22, cwf23, cwf24, cwf25, cwf26, cyp7/cwf27, cwf28, cwf29/ist3, lea1, msl1, prp5/cwf1, prp10, prp12/sap130, prp17, prp22, sap61, sap62, sap114, sap145, slu7, smb1, smd1, smd3, smf1, smg1 and syf2. Interacts with saf5; the interaction is direct.

It localises to the nucleus. The protein resides in the cytoplasm. Its subcellular location is the cytosol. Functionally, plays a role in pre-mRNA splicing as a core component of the spliceosomal U1, U2, U4 and U5 small nuclear ribonucleoproteins (snRNPs), the building blocks of the spliceosome. This Schizosaccharomyces pombe (strain 972 / ATCC 24843) (Fission yeast) protein is Small nuclear ribonucleoprotein Sm D3 (smd3).